The primary structure comprises 265 residues: 4-hydroxy-tetrahydrodipicolinate reductase (265 aa).

9–14 (GPRGRM) contributes to the NAD(+) binding site. Arg-37 contributes to the NADP(+) binding site. Residues 98–100 (GTT) and 124–127 (APNF) contribute to the NAD(+) site. Residue His-154 is the Proton donor/acceptor of the active site. A (S)-2,3,4,5-tetrahydrodipicolinate-binding site is contributed by His-155. Lys-158 serves as the catalytic Proton donor. Residue 164–165 (GT) participates in (S)-2,3,4,5-tetrahydrodipicolinate binding.

It belongs to the DapB family.

The protein localises to the cytoplasm. It carries out the reaction (S)-2,3,4,5-tetrahydrodipicolinate + NAD(+) + H2O = (2S,4S)-4-hydroxy-2,3,4,5-tetrahydrodipicolinate + NADH + H(+). It catalyses the reaction (S)-2,3,4,5-tetrahydrodipicolinate + NADP(+) + H2O = (2S,4S)-4-hydroxy-2,3,4,5-tetrahydrodipicolinate + NADPH + H(+). It participates in amino-acid biosynthesis; L-lysine biosynthesis via DAP pathway; (S)-tetrahydrodipicolinate from L-aspartate: step 4/4. Functionally, catalyzes the conversion of 4-hydroxy-tetrahydrodipicolinate (HTPA) to tetrahydrodipicolinate. The protein is 4-hydroxy-tetrahydrodipicolinate reductase of Geobacillus thermodenitrificans (strain NG80-2).